The primary structure comprises 419 residues: Serine hydroxymethyltransferase (419 aa).

(6S)-5,6,7,8-tetrahydrofolate is bound by residues Leu121 and 125–127 (GHL). Lys230 is modified (N6-(pyridoxal phosphate)lysine). (6S)-5,6,7,8-tetrahydrofolate-binding positions include Glu246 and 355–357 (SPF).

It belongs to the SHMT family. As to quaternary structure, homodimer. It depends on pyridoxal 5'-phosphate as a cofactor.

The protein resides in the cytoplasm. It catalyses the reaction (6R)-5,10-methylene-5,6,7,8-tetrahydrofolate + glycine + H2O = (6S)-5,6,7,8-tetrahydrofolate + L-serine. It participates in one-carbon metabolism; tetrahydrofolate interconversion. It functions in the pathway amino-acid biosynthesis; glycine biosynthesis; glycine from L-serine: step 1/1. Functionally, catalyzes the reversible interconversion of serine and glycine with tetrahydrofolate (THF) serving as the one-carbon carrier. This reaction serves as the major source of one-carbon groups required for the biosynthesis of purines, thymidylate, methionine, and other important biomolecules. Also exhibits THF-independent aldolase activity toward beta-hydroxyamino acids, producing glycine and aldehydes, via a retro-aldol mechanism. The protein is Serine hydroxymethyltransferase of Streptococcus suis (strain 98HAH33).